The following is a 165-amino-acid chain: 3-isopropylmalate dehydratase small subunit (165 aa).

The protein belongs to the LeuD family. LeuD type 2 subfamily. Heterodimer of LeuC and LeuD.

It carries out the reaction (2R,3S)-3-isopropylmalate = (2S)-2-isopropylmalate. It functions in the pathway amino-acid biosynthesis; L-leucine biosynthesis; L-leucine from 3-methyl-2-oxobutanoate: step 2/4. Catalyzes the isomerization between 2-isopropylmalate and 3-isopropylmalate, via the formation of 2-isopropylmaleate. The sequence is that of 3-isopropylmalate dehydratase small subunit from Saccharolobus islandicus (strain Y.G.57.14 / Yellowstone #1) (Sulfolobus islandicus).